The sequence spans 137 residues: Phospholipase A2 homolog PLA2-03 (137 aa).

Positions 1 to 16 (MRTLWIVAVLLVGVEG) are cleaved as a signal peptide. 7 disulfides stabilise this stretch: Cys-42–Cys-131, Cys-44–Cys-60, Cys-59–Cys-111, Cys-65–Cys-137, Cys-66–Cys-104, Cys-73–Cys-97, and Cys-91–Cys-102. Positions 121-133 (KKYKIFPKFLCKK) are important for membrane-damaging activities in eukaryotes and bacteria; heparin-binding.

Belongs to the phospholipase A2 family. Group II subfamily. K49 sub-subfamily. In terms of tissue distribution, expressed by the venom gland.

It is found in the secreted. Snake venom phospholipase A2 homolog that lacks enzymatic activity. Is myotoxic and displays edema-inducing activities in mouse paw. A model of myotoxic mechanism has been proposed: an apo Lys49-PLA2 is activated by the entrance of a hydrophobic molecule (e.g. fatty acid) at the hydrophobic channel of the protein leading to a reorientation of a monomer. This reorientation causes a transition between 'inactive' to 'active' states, causing alignment of C-terminal and membrane-docking sites (MDoS) side-by-side and putting the membrane-disruption sites (MDiS) in the same plane, exposed to solvent and in a symmetric position for both monomers. The MDoS region stabilizes the toxin on membrane by the interaction of charged residues with phospholipid head groups. Subsequently, the MDiS region destabilizes the membrane with penetration of hydrophobic residues. This insertion causes a disorganization of the membrane, allowing an uncontrolled influx of ions (i.e. calcium and sodium), and eventually triggering irreversible intracellular alterations and cell death. The chain is Phospholipase A2 homolog PLA2-03 from Ovophis okinavensis (Ryukyu Island pit viper).